The primary structure comprises 432 residues: 3-phosphoshikimate 1-carboxyvinyltransferase (432 aa).

Lys-23, Ser-24, and Arg-28 together coordinate 3-phosphoshikimate. Position 23 (Lys-23) interacts with phosphoenolpyruvate. The phosphoenolpyruvate site is built by Gly-95 and Arg-123. Positions 167, 169, 317, and 344 each coordinate 3-phosphoshikimate. Position 169 (Gln-169) interacts with phosphoenolpyruvate. Asp-317 serves as the catalytic Proton acceptor. Positions 348 and 390 each coordinate phosphoenolpyruvate.

Belongs to the EPSP synthase family. As to quaternary structure, monomer.

The protein localises to the cytoplasm. It catalyses the reaction 3-phosphoshikimate + phosphoenolpyruvate = 5-O-(1-carboxyvinyl)-3-phosphoshikimate + phosphate. Its pathway is metabolic intermediate biosynthesis; chorismate biosynthesis; chorismate from D-erythrose 4-phosphate and phosphoenolpyruvate: step 6/7. Functionally, catalyzes the transfer of the enolpyruvyl moiety of phosphoenolpyruvate (PEP) to the 5-hydroxyl of shikimate-3-phosphate (S3P) to produce enolpyruvyl shikimate-3-phosphate and inorganic phosphate. In Staphylococcus aureus (strain JH9), this protein is 3-phosphoshikimate 1-carboxyvinyltransferase.